A 744-amino-acid polypeptide reads, in one-letter code: Cytosolic neutral trehalase (744 aa).

Ca(2+)-binding residues include Asp99, Asp101, Asn103, Gln105, and Asp110. Substrate is bound by residues Arg286, Trp293–Asp294, Asn330, Arg339–Gln341, Glu406, Arg455, and Gly458. Residues Asp460 and Glu665 each act as proton donor/acceptor in the active site.

This sequence belongs to the glycosyl hydrolase 37 family. Ca(2+) serves as cofactor.

Its subcellular location is the cytoplasm. The catalysed reaction is alpha,alpha-trehalose + H2O = alpha-D-glucose + beta-D-glucose. It functions in the pathway carbohydrate degradation. In terms of biological role, hydrolyzes intracellular trehalose to glucose. This Neurospora crassa (strain ATCC 24698 / 74-OR23-1A / CBS 708.71 / DSM 1257 / FGSC 987) protein is Cytosolic neutral trehalase.